Here is a 174-residue protein sequence, read N- to C-terminus: Ferredoxin-2, mitochondrial (174 aa).

A mitochondrion-targeting transit peptide spans 1–43; that stretch reads MAASMARGVSARVLLRAAGGSWGPRAGHAAVTSRTFGTTGERR. Residues 26-52 are disordered; sequence AGHAAVTSRTFGTTGERRAGEEAADSP. The 2Fe-2S ferredoxin-type domain occupies 59–161; it reads VNVVFVDRSG…GVEFALPKIT (103 aa). [2Fe-2S] cluster contacts are provided by Cys96, Cys102, Cys105, and Cys142.

It belongs to the adrenodoxin/putidaredoxin family. Component of the mitochondrial core iron-sulfur cluster (ISC) complex composed of NFS1, LYRM4, NDUFAB1, ISCU, FXN, and FDX2; this complex is a heterohexamer containing two copies of each monomer. Form a heterodimer complex with NFS1. Interacts (in both their reduced and oxidized states) with the cysteine desulfurase (NFS1:LYRM4) complex; this interaction stimulates cysteine desulfurase activity, and serves as a reductant for Fe-S cluster assembly. [2Fe-2S] cluster is required as a cofactor.

The protein resides in the mitochondrion. Its subcellular location is the mitochondrion matrix. Its function is as follows. Electron donor, of the core iron-sulfur cluster (ISC) assembly complex, that acts to reduce the persulfide into sulfide during [2Fe-2S] clusters assembly on the scaffolding protein ISCU. The core iron-sulfur cluster (ISC) assembly complex is involved in the de novo synthesis of a [2Fe-2S] cluster, the first step of the mitochondrial iron-sulfur protein biogenesis. This process is initiated by the cysteine desulfurase complex (NFS1:LYRM4:NDUFAB1) that produces persulfide which is delivered on the scaffold protein ISCU in a FXN-dependent manner. Then this complex is stabilized by FDX2 which provides reducing equivalents to accomplish the [2Fe-2S] cluster assembly. Finally, the [2Fe-2S] cluster is transferred from ISCU to chaperone proteins, including HSCB, HSPA9 and GLRX5. Essential for coenzyme Q biosynthesis: together with FDXR, transfers the electrons required for the hydroxylation reaction performed by COQ6. This Mus musculus (Mouse) protein is Ferredoxin-2, mitochondrial.